The sequence spans 90 residues: Lantipeptide prochlorosin 1.7 (90 aa).

Positions 1-68 are excised as a propeptide; that stretch reads MSEEQLKAFI…DAELEGVAGG (68 aa). 2,3-didehydrobutyrine occurs at positions 69 and 73. The segment at residues 76 to 79 is a cross-link (lanthionine (Ser-Cys)); the sequence is SITC. 2 cross-links (beta-methyllanthionine (Thr-Cys)) span residues 78–82 and 81–90; these read TCETC and TCDLLVGKMC.

In terms of processing, cross-links are proved in vitro, when coepressed in E.coli with the ProcM lanthionine synthetase. Post-translationally, the lanthionine residue has a DL configuration (with 2S,6R stereochemistry), whereas the beta-methyllanthionine residues have a DL configuration (with 2S,3S,6R stereochemistry). Maturation of prochlorosin involves the enzymatic conversion of Thr, and Ser into dehydrated AA and the formation of thioether bonds with cysteines. This is followed by membrane translocation and cleavage of the modified precursor.

Its subcellular location is the secreted. In terms of biological role, lanthionine-containing peptide (lantipeptide) with unknown function. Does not show antibiotic activity against Lactococcus lactis 117 and Bacillus subtilis 6633 bacteria. Organisms that produce this peptide live in oligotrophic environments at very dilute concentrations, suggesting this peptide is not secreted to influence other bacteria. The chain is Lantipeptide prochlorosin 1.7 from Prochlorococcus marinus (strain MIT 9313).